Here is a 220-residue protein sequence, read N- to C-terminus: Protein CREG1 (220 aa).

Positions 1 to 31 (MAARAPELARSLLAALLAPALVALLVSPASG) are cleaved as a signal peptide. The segment at 30–53 (SGRGGRDHGDWDVDRRLPPLPPRE) is disordered. Basic and acidic residues predominate over residues 33–53 (GGRDHGDWDVDRRLPPLPPRE). N-linked (GlcNAc...) asparagine glycans are attached at residues N160 and N216.

Belongs to the CREG family. As to quaternary structure, homodimer. Interacts with IGF2R; the interaction is dependent on glycosylation. N-glycosylated. As to expression, widely expressed.

The protein localises to the secreted. Its function is as follows. May contribute to the transcriptional control of cell growth and differentiation. Antagonizes transcriptional activation and cellular transformation by the adenovirus E1A protein. The transcriptional control activity of cell growth requires interaction with IGF2R. The polypeptide is Protein CREG1 (Creg1) (Mus musculus (Mouse)).